The following is a 367-amino-acid chain: tRNA-specific 2-thiouridylase MnmA (367 aa).

Residues 7-14 (AMSGGVDS) and Met-33 contribute to the ATP site. Cys-108 serves as the catalytic Nucleophile. The cysteines at positions 108 and 200 are disulfide-linked. Residue Gly-132 participates in ATP binding. Positions 150–152 (KDQ) are interaction with tRNA. Cys-200 functions as the Cysteine persulfide intermediate in the catalytic mechanism. An interaction with tRNA region spans residues 301–302 (RY).

The protein belongs to the MnmA/TRMU family.

The protein localises to the cytoplasm. It carries out the reaction S-sulfanyl-L-cysteinyl-[protein] + uridine(34) in tRNA + AH2 + ATP = 2-thiouridine(34) in tRNA + L-cysteinyl-[protein] + A + AMP + diphosphate + H(+). Catalyzes the 2-thiolation of uridine at the wobble position (U34) of tRNA, leading to the formation of s(2)U34. This chain is tRNA-specific 2-thiouridylase MnmA, found in Thermus thermophilus (strain ATCC BAA-163 / DSM 7039 / HB27).